The sequence spans 526 residues: Inosine-5'-monophosphate dehydrogenase (526 aa).

CBS domains follow at residues 120–179 (FIQD…EDPV) and 183–239 (MATD…PLAS). NAD(+)-binding positions include 276–278 (DSS) and 326–328 (GMG). The K(+) site is built by G328 and G330. An IMP-binding site is contributed by S331. C333 is a K(+) binding site. Residue C333 is the Thioimidate intermediate of the active site. Residues 366–368 (DGG) and 389–390 (GS) contribute to the IMP site. The Proton acceptor role is filled by R439. An IMP-binding site is contributed by Q451. S506 provides a ligand contact to K(+). The tract at residues 506-526 (SAQTEGNVHGLHTHEKKLYSS) is disordered. Basic and acidic residues predominate over residues 517 to 526 (HTHEKKLYSS).

This sequence belongs to the IMPDH/GMPR family. Homotetramer. The cofactor is K(+).

It localises to the cytoplasm. The enzyme catalyses IMP + NAD(+) + H2O = XMP + NADH + H(+). The protein operates within secondary metabolite biosynthesis; terpenoid biosynthesis. With respect to regulation, mycophenolic acid (MPA) is a non-competitive inhibitor that prevents formation of the closed enzyme conformation by binding to the same site as the amobile flap. In contrast, mizoribine monophosphate (MZP) is a competitive inhibitor that induces the closed conformation. MPA is a potent inhibitor of mammalian IMPDHs but a poor inhibitor of the bacterial enzymes. MZP is a more potent inhibitor of bacterial IMPDH. Its function is as follows. Catalyzes the conversion of inosine 5'-phosphate (IMP) to xanthosine 5'-phosphate (XMP), the first committed and rate-limiting step in the de novo synthesis of guanine nucleotides, and therefore plays an important role in the regulation of cell growth. Part of the gene cluster that mediates the biosynthesis of mycophenolic acid (MPA), the first isolated antibiotic natural product in the world. Does not play a role in the biosynthesis of MPA, but is involved in self resistance to MPA, since MPA acts as an inhibitor of IMP dehydrogenases. This Penicillium roqueforti (strain FM164) protein is Inosine-5'-monophosphate dehydrogenase.